Here is a 265-residue protein sequence, read N- to C-terminus: Pyridoxine 5'-phosphate synthase (265 aa).

Residue Asn-6 coordinates 3-amino-2-oxopropyl phosphate. 8–9 is a binding site for 1-deoxy-D-xylulose 5-phosphate; it reads DH. Arg-17 lines the 3-amino-2-oxopropyl phosphate pocket. His-42 serves as the catalytic Proton acceptor. Arg-44 and His-49 together coordinate 1-deoxy-D-xylulose 5-phosphate. The active-site Proton acceptor is the Glu-69. Thr-99 is a 1-deoxy-D-xylulose 5-phosphate binding site. His-213 serves as the catalytic Proton donor. 3-amino-2-oxopropyl phosphate is bound by residues Gly-214 and 235-236; that span reads GQ.

This sequence belongs to the PNP synthase family. As to quaternary structure, homooctamer; tetramer of dimers.

The protein resides in the cytoplasm. The enzyme catalyses 3-amino-2-oxopropyl phosphate + 1-deoxy-D-xylulose 5-phosphate = pyridoxine 5'-phosphate + phosphate + 2 H2O + H(+). It functions in the pathway cofactor biosynthesis; pyridoxine 5'-phosphate biosynthesis; pyridoxine 5'-phosphate from D-erythrose 4-phosphate: step 5/5. Functionally, catalyzes the complicated ring closure reaction between the two acyclic compounds 1-deoxy-D-xylulose-5-phosphate (DXP) and 3-amino-2-oxopropyl phosphate (1-amino-acetone-3-phosphate or AAP) to form pyridoxine 5'-phosphate (PNP) and inorganic phosphate. This is Pyridoxine 5'-phosphate synthase from Nitratiruptor sp. (strain SB155-2).